A 274-amino-acid chain; its full sequence is Large ribosomal subunit protein uL2 (274 aa).

2 disordered regions span residues 28-54 (KPYA…TRHI) and 221-274 (RGTA…RTKK). Polar residues predominate over residues 39-49 (KTGGRNNNGRI).

This sequence belongs to the universal ribosomal protein uL2 family. Part of the 50S ribosomal subunit. Forms a bridge to the 30S subunit in the 70S ribosome.

Its function is as follows. One of the primary rRNA binding proteins. Required for association of the 30S and 50S subunits to form the 70S ribosome, for tRNA binding and peptide bond formation. It has been suggested to have peptidyltransferase activity; this is somewhat controversial. Makes several contacts with the 16S rRNA in the 70S ribosome. This is Large ribosomal subunit protein uL2 from Photorhabdus laumondii subsp. laumondii (strain DSM 15139 / CIP 105565 / TT01) (Photorhabdus luminescens subsp. laumondii).